The following is a 250-amino-acid chain: Type III pantothenate kinase (250 aa).

ATP is bound at residue 6–13 (DVGNTNTV). Residue 103 to 106 (GADR) coordinates substrate. Asp-105 (proton acceptor) is an active-site residue. Residue Asp-125 coordinates K(+). Thr-128 is a binding site for ATP. Thr-180 is a binding site for substrate.

Belongs to the type III pantothenate kinase family. Homodimer. Requires NH4(+) as cofactor. It depends on K(+) as a cofactor.

It localises to the cytoplasm. The catalysed reaction is (R)-pantothenate + ATP = (R)-4'-phosphopantothenate + ADP + H(+). Its pathway is cofactor biosynthesis; coenzyme A biosynthesis; CoA from (R)-pantothenate: step 1/5. Catalyzes the phosphorylation of pantothenate (Pan), the first step in CoA biosynthesis. The chain is Type III pantothenate kinase from Frankia casuarinae (strain DSM 45818 / CECT 9043 / HFP020203 / CcI3).